The chain runs to 354 residues: DNA polymerase IV (354 aa).

Positions 8–189 constitute a UmuC domain; sequence IIHVDMDCFY…LPLEKIPGVG (182 aa). 2 residues coordinate Mg(2+): Asp12 and Asp107. The active site involves Glu108.

It belongs to the DNA polymerase type-Y family. As to quaternary structure, monomer. The cofactor is Mg(2+).

The protein localises to the cytoplasm. It carries out the reaction DNA(n) + a 2'-deoxyribonucleoside 5'-triphosphate = DNA(n+1) + diphosphate. In terms of biological role, poorly processive, error-prone DNA polymerase involved in untargeted mutagenesis. Copies undamaged DNA at stalled replication forks, which arise in vivo from mismatched or misaligned primer ends. These misaligned primers can be extended by PolIV. Exhibits no 3'-5' exonuclease (proofreading) activity. May be involved in translesional synthesis, in conjunction with the beta clamp from PolIII. This Vibrio parahaemolyticus serotype O3:K6 (strain RIMD 2210633) protein is DNA polymerase IV.